A 757-amino-acid polypeptide reads, in one-letter code: POU domain, class 2, transcription factor 1 (757 aa).

4 disordered regions span residues 1 to 43 (MKLH…QTNG), 271 to 295 (AATP…SLEE), 375 to 398 (SLSN…RRKK), and 532 to 574 (VSSV…TSPL). Polar residues-rich tracts occupy residues 19-43 (RMNN…QTNG) and 275-285 (VQQLPQSQTTP). The region spanning 294–368 (EEPSDLEELE…LLEKWLNDAE (75 aa)) is the POU-specific domain. Residues 395-454 (RRKKRTSIETNIRVALEKSFLENQKPTSEEITMIADQLNMEKEVIRVWFCNRRQKEKRIN) constitute a DNA-binding region (homeobox).

This sequence belongs to the POU transcription factor family. Class-2 subfamily.

Its subcellular location is the cytoplasm. The protein resides in the nucleus. Functionally, transcription factor that binds to the octamer motif (5'-ATTTGCAT-3') and activates the promoters of the genes for some small nuclear RNAs (snRNA) and histone H2B. Acts downstream of Notch signaling during radial glia formation. Regulates apoptosis, possibly via an FGF-signaling pathway. The sequence is that of POU domain, class 2, transcription factor 1 from Xenopus tropicalis (Western clawed frog).